The following is a 155-amino-acid chain: Pathogenesis-related protein 2 (155 aa).

This sequence belongs to the BetVI family.

This is Pathogenesis-related protein 2 from Phaseolus vulgaris (Kidney bean).